The chain runs to 164 residues: Lipoprotein signal peptidase (164 aa).

The next 3 membrane-spanning stretches (helical) occupy residues 12-32, 70-90, and 102-122; these read WLWL…LILQ, WFFA…MYRS, and ALII…GFVV. Residues Asp123 and Asp141 contribute to the active site. Residues 137 to 157 traverse the membrane as a helical segment; the sequence is FNLADTAICVGAALIVLEGFL.

It belongs to the peptidase A8 family.

It is found in the cell inner membrane. It catalyses the reaction Release of signal peptides from bacterial membrane prolipoproteins. Hydrolyzes -Xaa-Yaa-Zaa-|-(S,diacylglyceryl)Cys-, in which Xaa is hydrophobic (preferably Leu), and Yaa (Ala or Ser) and Zaa (Gly or Ala) have small, neutral side chains.. The protein operates within protein modification; lipoprotein biosynthesis (signal peptide cleavage). Functionally, this protein specifically catalyzes the removal of signal peptides from prolipoproteins. In Escherichia coli O6:K15:H31 (strain 536 / UPEC), this protein is Lipoprotein signal peptidase.